We begin with the raw amino-acid sequence, 293 residues long: Extracellular metalloprotease PODANS_2_14170 (293 aa).

An N-terminal signal peptide occupies residues 1 to 18 (MRFSLALAAAGLAQTAFA). Residue Asn60 is glycosylated (N-linked (GlcNAc...) asparagine). Zn(2+) is bound at residue His206. Residue Glu207 is part of the active site. His210 lines the Zn(2+) pocket. Cys242 and Cys269 form a disulfide bridge.

The protein belongs to the peptidase M43B family.

Its subcellular location is the secreted. Secreted metalloproteinase that allows assimilation of proteinaceous substrates. This is Extracellular metalloprotease PODANS_2_14170 from Podospora anserina (strain S / ATCC MYA-4624 / DSM 980 / FGSC 10383) (Pleurage anserina).